The chain runs to 154 residues: Minor structural pilin EpdC (154 aa).

Positions 1-13 are excised as a propeptide; the sequence is MIKMLQLPFNKKG. Positions 14–24 match the QXSXEXXXL motif; it reads QVSFDFIIAML.

In terms of processing, the N-terminus is cleaved by the prepilin peptidase EppA, which recognizes the class III signal sequence.

The protein localises to the secreted. It localises to the cell surface. Its subcellular location is the fimbrium. Minor component of the type IV-like pili. Essential for pili formation. The sequence is that of Minor structural pilin EpdC from Methanococcus maripaludis (strain DSM 14266 / JCM 13030 / NBRC 101832 / S2 / LL).